Reading from the N-terminus, the 245-residue chain is 1-(5-phosphoribosyl)-5-[(5-phosphoribosylamino)methylideneamino] imidazole-4-carboxamide isomerase (245 aa).

D7 (proton acceptor) is an active-site residue. The Proton donor role is filled by D129.

It belongs to the HisA/HisF family.

Its subcellular location is the cytoplasm. It carries out the reaction 1-(5-phospho-beta-D-ribosyl)-5-[(5-phospho-beta-D-ribosylamino)methylideneamino]imidazole-4-carboxamide = 5-[(5-phospho-1-deoxy-D-ribulos-1-ylimino)methylamino]-1-(5-phospho-beta-D-ribosyl)imidazole-4-carboxamide. It participates in amino-acid biosynthesis; L-histidine biosynthesis; L-histidine from 5-phospho-alpha-D-ribose 1-diphosphate: step 4/9. This Escherichia coli O9:H4 (strain HS) protein is 1-(5-phosphoribosyl)-5-[(5-phosphoribosylamino)methylideneamino] imidazole-4-carboxamide isomerase.